Reading from the N-terminus, the 189-residue chain is GTP cyclohydrolase 1 (189 aa).

Residues cysteine 78, histidine 81, and cysteine 150 each coordinate Zn(2+).

It belongs to the GTP cyclohydrolase I family. Homomer.

The enzyme catalyses GTP + H2O = 7,8-dihydroneopterin 3'-triphosphate + formate + H(+). It functions in the pathway cofactor biosynthesis; 7,8-dihydroneopterin triphosphate biosynthesis; 7,8-dihydroneopterin triphosphate from GTP: step 1/1. This Lysinibacillus sphaericus (strain C3-41) protein is GTP cyclohydrolase 1.